A 454-amino-acid polypeptide reads, in one-letter code: Chromosomal replication initiator protein DnaA (454 aa).

A domain I, interacts with DnaA modulators region spans residues Met1–Glu80. The domain II stretch occupies residues Glu80–Ser117. The interval His118 to Gln335 is domain III, AAA+ region. ATP is bound by residues Gly163, Gly165, Lys166, and Thr167. The segment at Asp336–Ala454 is domain IV, binds dsDNA.

This sequence belongs to the DnaA family. As to quaternary structure, oligomerizes as a right-handed, spiral filament on DNA at oriC.

Its subcellular location is the cytoplasm. Its function is as follows. Plays an essential role in the initiation and regulation of chromosomal replication. ATP-DnaA binds to the origin of replication (oriC) to initiate formation of the DNA replication initiation complex once per cell cycle. Binds the DnaA box (a 9 base pair repeat at the origin) and separates the double-stranded (ds)DNA. Forms a right-handed helical filament on oriC DNA; dsDNA binds to the exterior of the filament while single-stranded (ss)DNA is stabiized in the filament's interior. The ATP-DnaA-oriC complex binds and stabilizes one strand of the AT-rich DNA unwinding element (DUE), permitting loading of DNA polymerase. After initiation quickly degrades to an ADP-DnaA complex that is not apt for DNA replication. Binds acidic phospholipids. The chain is Chromosomal replication initiator protein DnaA from Haemophilus influenzae (strain ATCC 51907 / DSM 11121 / KW20 / Rd).